The primary structure comprises 219 residues: 7-cyano-7-deazaguanine synthase (219 aa).

ATP is bound at residue 10–20; sequence FSGGQDSTTCL. Residues Cys-187, Cys-196, Cys-199, and Cys-202 each contribute to the Zn(2+) site.

Belongs to the QueC family. As to quaternary structure, homodimer. Zn(2+) serves as cofactor.

The enzyme catalyses 7-carboxy-7-deazaguanine + NH4(+) + ATP = 7-cyano-7-deazaguanine + ADP + phosphate + H2O + H(+). It functions in the pathway purine metabolism; 7-cyano-7-deazaguanine biosynthesis. Its function is as follows. Catalyzes the ATP-dependent conversion of 7-carboxy-7-deazaguanine (CDG) to 7-cyano-7-deazaguanine (preQ(0)). This Lysinibacillus sphaericus (strain C3-41) protein is 7-cyano-7-deazaguanine synthase.